Here is a 45-residue protein sequence, read N- to C-terminus: Major cold shock protein (45 aa).

Residues 1–45 (EKGFGFISTENGQDVFAHFSAIQTNGFKTLEEGQKVAFDVEEGQR) enclose the CSD domain.

As to quaternary structure, homodimer.

It localises to the cytoplasm. In Streptococcus pyogenes, this protein is Major cold shock protein (cspA).